The primary structure comprises 258 residues: tRNA pseudouridine synthase A (258 aa).

Asp-52 acts as the Nucleophile in catalysis. Tyr-110 contacts substrate.

This sequence belongs to the tRNA pseudouridine synthase TruA family. Homodimer.

The enzyme catalyses uridine(38/39/40) in tRNA = pseudouridine(38/39/40) in tRNA. In terms of biological role, formation of pseudouridine at positions 38, 39 and 40 in the anticodon stem and loop of transfer RNAs. The polypeptide is tRNA pseudouridine synthase A (Francisella tularensis subsp. mediasiatica (strain FSC147)).